A 332-amino-acid polypeptide reads, in one-letter code: MGHKKTVSIIGAGNVGEHIASLLVLKGAVNIRLFDLPKKDGEKLYAHVKGKALDMLQMACALGIDTDISGFVVDQNGNGYEALEGSDIVVITAGFPRKPGMSRDDLLGINISIMNTISEQIKKYAKNSIVIVVTNPVDIMTYAVYKLLGCNRKRVIGMAGVLDSSRFRTFISLELNVSPKDVHAYVIGGHGDEMVPLAGVSNVGGIPISTLIDEKKIKELVERTRFGGGEIVDYMGTSAYHAPAASVVEMIESVALNAKRVLTCSVLLDEEASKYYEAENLCVGVPVKLGENGVEKIVKVPMTDFERDLWMKSVASVKKNIAIADEFVSKYI.

NAD(+)-binding positions include 11-16 and aspartate 35; that span reads GAGNVG. 2 residues coordinate substrate: arginine 97 and arginine 103. Residues asparagine 110 and 133 to 135 each bind NAD(+); that span reads VTN. 2 residues coordinate substrate: asparagine 135 and arginine 166. Histidine 190 serves as the catalytic Proton acceptor.

Belongs to the LDH/MDH superfamily. MDH type 3 family.

The enzyme catalyses (S)-malate + NAD(+) = oxaloacetate + NADH + H(+). Catalyzes the reversible oxidation of malate to oxaloacetate. In Hydrogenobaculum sp. (strain Y04AAS1), this protein is Malate dehydrogenase.